Here is a 499-residue protein sequence, read N- to C-terminus: Ethanolamine-phosphate phospho-lyase (499 aa).

Lys278 is subject to N6-(pyridoxal phosphate)lysine. A compositionally biased stretch (basic and acidic residues) spans 468 to 479; the sequence is RDSTTDSKENPS. The tract at residues 468–499 is disordered; the sequence is RDSTTDSKENPSRKRNGMCTDTHSLLSKRLKT.

The protein belongs to the class-III pyridoxal-phosphate-dependent aminotransferase family. In terms of assembly, homotetramer. The cofactor is pyridoxal 5'-phosphate.

The protein localises to the mitochondrion. The enzyme catalyses phosphoethanolamine + H2O = acetaldehyde + NH4(+) + phosphate. Catalyzes the pyridoxal-phosphate-dependent breakdown of phosphoethanolamine, converting it to ammonia, inorganic phosphate and acetaldehyde. This chain is Ethanolamine-phosphate phospho-lyase (ETNPPL), found in Homo sapiens (Human).